Consider the following 623-residue polypeptide: tRNA uridine 5-carboxymethylaminomethyl modification enzyme MnmG (623 aa).

12 to 17 (GAGHAG) contacts FAD. Residue 272 to 286 (GPRYCPSIEDKINRF) participates in NAD(+) binding.

This sequence belongs to the MnmG family. Homodimer. Heterotetramer of two MnmE and two MnmG subunits. It depends on FAD as a cofactor.

Its subcellular location is the cytoplasm. In terms of biological role, NAD-binding protein involved in the addition of a carboxymethylaminomethyl (cmnm) group at the wobble position (U34) of certain tRNAs, forming tRNA-cmnm(5)s(2)U34. The polypeptide is tRNA uridine 5-carboxymethylaminomethyl modification enzyme MnmG (Flavobacterium johnsoniae (strain ATCC 17061 / DSM 2064 / JCM 8514 / BCRC 14874 / CCUG 350202 / NBRC 14942 / NCIMB 11054 / UW101) (Cytophaga johnsonae)).